The sequence spans 410 residues: UPF0761 membrane protein Csal_1895 (410 aa).

The next 6 membrane-spanning stretches (helical) occupy residues 43 to 63 (LFAVVPFMTVLYAMLSAIPSF), 99 to 119 (SLTLIGLMFLLVTAVMMMVTV), 139 to 159 (FLLYWAVLTLGPLLLGSGFLL), 180 to 200 (VAFLRLLPLTLSFTAFVFIYM), 212 to 232 (AVAGAGLAALALELAKGAFSL), and 247 to 267 (FAAVPLFLVWVFLSWAIVLVG).

The protein belongs to the UPF0761 family.

Its subcellular location is the cell inner membrane. The polypeptide is UPF0761 membrane protein Csal_1895 (Chromohalobacter salexigens (strain ATCC BAA-138 / DSM 3043 / CIP 106854 / NCIMB 13768 / 1H11)).